A 67-amino-acid polypeptide reads, in one-letter code: Brevinin-1CDYc (67 aa).

The first 22 residues, 1 to 22, serve as a signal peptide directing secretion; the sequence is MFTLKKSLLLIFFLGTINLSLC. Residues 23-45 constitute a propeptide that is removed on maturation; the sequence is EEERNADEEERRDDPEERDVEVE. A disulfide bridge connects residues cysteine 61 and cysteine 67.

The protein belongs to the frog skin active peptide (FSAP) family. Brevinin subfamily. In terms of tissue distribution, expressed by the skin glands.

The protein resides in the secreted. Functionally, antimicrobial peptide. The sequence is that of Brevinin-1CDYc from Rana huanrensis (Huanren frog).